The sequence spans 415 residues: Putative FNIP repeat-containing protein L415 (415 aa).

The stretch at 148 to 185 (FIKKGAIPDSVTHLYFGSDYLSKDIIPKNVVYLRFGDF) is one FNIP repeat.

The sequence is that of Putative FNIP repeat-containing protein L415 from Acanthamoeba polyphaga mimivirus (APMV).